A 330-amino-acid polypeptide reads, in one-letter code: Ferric enterobactin transport system permease protein FepG (330 aa).

Residues M1–R7 lie on the Periplasmic side of the membrane. Residues L8–R28 traverse the membrane as a helical segment. At S29–R62 the chain is on the cytoplasmic side. The chain crosses the membrane as a helical span at residues V63 to L83. Residues M84 to D92 are Periplasmic-facing. Residues V93 to Q113 form a helical membrane-spanning segment. Residues D114–A117 lie on the Cytoplasmic side of the membrane. Residues I118 to W138 traverse the membrane as a helical segment. Topologically, residues R139–R146 are periplasmic. The helical transmembrane segment at L147–L167 threads the bilayer. The Cytoplasmic segment spans residues K168–W190. A helical membrane pass occupies residues A191–V211. Over R212–R235 the chain is Periplasmic. Residues L236–I256 traverse the membrane as a helical segment. Residues S257–R275 lie on the Cytoplasmic side of the membrane. A helical membrane pass occupies residues W276–A296. Residues Q297–Y303 are Periplasmic-facing. A helical transmembrane segment spans residues Q304–I324. The Cytoplasmic segment spans residues Q325 to K330.

Belongs to the binding-protein-dependent transport system permease family. FecCD subfamily. The complex is composed of two ATP-binding proteins (FepC), two transmembrane proteins (FepD and FepG) and a solute-binding protein (FepB).

It is found in the cell inner membrane. Its function is as follows. Part of the ABC transporter complex FepBDGC involved in ferric enterobactin uptake. Responsible for the translocation of the substrate across the membrane. This Escherichia coli (strain K12) protein is Ferric enterobactin transport system permease protein FepG (fepG).